Here is a 339-residue protein sequence, read N- to C-terminus: DNA-directed RNA polymerase subunit alpha (339 aa).

Residues 1–233 (MVREEVAGST…DLFLPFLHAE (233 aa)) are alpha N-terminal domain (alpha-NTD). An alpha C-terminal domain (alpha-CTD) region spans residues 264 to 339 (KKGIPLNCIF…IDLLKNKLSF (76 aa)).

The protein belongs to the RNA polymerase alpha chain family. In plastids the minimal PEP RNA polymerase catalytic core is composed of four subunits: alpha, beta, beta', and beta''. When a (nuclear-encoded) sigma factor is associated with the core the holoenzyme is formed, which can initiate transcription.

It localises to the plastid. Its subcellular location is the chloroplast. The enzyme catalyses RNA(n) + a ribonucleoside 5'-triphosphate = RNA(n+1) + diphosphate. In terms of biological role, DNA-dependent RNA polymerase catalyzes the transcription of DNA into RNA using the four ribonucleoside triphosphates as substrates. This chain is DNA-directed RNA polymerase subunit alpha, found in Elymus californicus (California bottlebrush grass).